The sequence spans 260 residues: Indole-3-glycerol phosphate synthase (260 aa).

It belongs to the TrpC family.

The enzyme catalyses 1-(2-carboxyphenylamino)-1-deoxy-D-ribulose 5-phosphate + H(+) = (1S,2R)-1-C-(indol-3-yl)glycerol 3-phosphate + CO2 + H2O. It functions in the pathway amino-acid biosynthesis; L-tryptophan biosynthesis; L-tryptophan from chorismate: step 4/5. In Leifsonia xyli subsp. xyli (strain CTCB07), this protein is Indole-3-glycerol phosphate synthase.